Consider the following 494-residue polypeptide: 3-octaprenyl-4-hydroxybenzoate carboxy-lyase (494 aa).

Asn-172 contributes to the Mn(2+) binding site. Prenylated FMN is bound by residues 175 to 177 (IYR), 189 to 191 (RWL), and 194 to 195 (RG). Glu-238 is a Mn(2+) binding site. Asp-287 serves as the catalytic Proton donor.

This sequence belongs to the UbiD family. As to quaternary structure, homohexamer. Prenylated FMN is required as a cofactor. The cofactor is Mn(2+).

The protein resides in the cell membrane. It carries out the reaction a 4-hydroxy-3-(all-trans-polyprenyl)benzoate + H(+) = a 2-(all-trans-polyprenyl)phenol + CO2. It functions in the pathway cofactor biosynthesis; ubiquinone biosynthesis. Functionally, catalyzes the decarboxylation of 3-octaprenyl-4-hydroxy benzoate to 2-octaprenylphenol, an intermediate step in ubiquinone biosynthesis. The polypeptide is 3-octaprenyl-4-hydroxybenzoate carboxy-lyase (Shigella flexneri serotype 5b (strain 8401)).